The chain runs to 363 residues: Sulfate/thiosulfate import ATP-binding protein CysA (363 aa).

The 235-residue stretch at 3-237 folds into the ABC transporter domain; that stretch reads IEINNISKYF…PATRFVLEFL (235 aa). 35 to 42 is a binding site for ATP; the sequence is GPSGSGKT.

The protein belongs to the ABC transporter superfamily. Sulfate/tungstate importer (TC 3.A.1.6) family. As to quaternary structure, the complex is composed of two ATP-binding proteins (CysA), two transmembrane proteins (CysT and CysW) and a solute-binding protein (CysP).

Its subcellular location is the cell inner membrane. The enzyme catalyses sulfate(out) + ATP + H2O = sulfate(in) + ADP + phosphate + H(+). The catalysed reaction is thiosulfate(out) + ATP + H2O = thiosulfate(in) + ADP + phosphate + H(+). In terms of biological role, part of the ABC transporter complex CysAWTP involved in sulfate/thiosulfate import. Responsible for energy coupling to the transport system. This chain is Sulfate/thiosulfate import ATP-binding protein CysA, found in Yersinia pestis.